A 273-amino-acid polypeptide reads, in one-letter code: MPTQLQRPLARLLALALLVLLARAAEDEPPFCAVRNRSTGSYIDLSPLASNVSGTPPNWLVRGWQYGANFTLGVCTSPLGDGPAAYYSDTGRRVSIGRVATTPRYTGKKLTLTYEGGDLCPNRVDRKSSLLYFVCDRDIHTIAQVSLLGVLHNCSYLFEVRSVHACAAARAAGDRSVLGIFAAILLVFAAVELARRCCAAPLRRRFRPDFPADRPRWAPAPTGWAARTRAFFARAAEPRQAIKLASSPPGHPASDMEAQNTLLDSLDVRSSGA.

Positions methionine 1 to alanine 24 are cleaved as a signal peptide. Residues alanine 25–serine 176 lie on the Lumenal side of the membrane. Positions proline 30 to alanine 168 constitute an MRH domain. 3 disulfides stabilise this stretch: cysteine 32-cysteine 75, cysteine 120-cysteine 154, and cysteine 135-cysteine 166. Asparagine 36, asparagine 51, asparagine 69, and asparagine 153 each carry an N-linked (GlcNAc...) asparagine glycan. The helical transmembrane segment at valine 177–alanine 194 threads the bilayer. Residues arginine 195–alanine 273 are Cytoplasmic-facing.

This sequence belongs to the MRL1/IGF2R family.

It localises to the golgi apparatus. It is found in the trans-Golgi network membrane. The protein localises to the endosome membrane. Functionally, sorting receptor involved in the transport of vacuolar enzymes from the Golgi complex to the vacuole. The chain is Mannose 6-phosphate receptor-like protein 1 (MRL1) from Eremothecium gossypii (strain ATCC 10895 / CBS 109.51 / FGSC 9923 / NRRL Y-1056) (Yeast).